The primary structure comprises 297 residues: GTP-binding protein REM 1 (297 aa).

Polar residues predominate over residues 1 to 10; sequence MTLNTQQEAK. The segment at 1 to 73 is disordered; it reads MTLNTQQEAK…DGWSSESSDS (73 aa). S51 is modified (phosphoserine). The span at 64–73 shows a compositional bias: low complexity; it reads DGWSSESSDS. GTP-binding positions include 87–94 and 194–197; these read GDPGVGKT and NKAD. The interval 267-286 is calmodulin-binding; that stretch reads ARRFLARLTARSARRRALKA.

The protein belongs to the small GTPase superfamily. RGK family. In vitro, interacts with calmodulin in a calcium-dependent manner. Interacts 14-3-3 family members including YWHAE, YWHAH, YWHAQ, YWHAZ in a phosphorylation-dependent manner. As to expression, high expression in cardiac muscle. Moderate expression in lung, skeletal muscle and kidney. Low levels in spleen and brain.

Functionally, promotes endothelial cell sprouting and actin cytoskeletal reorganization. May be involved in angiogenesis. May function in Ca(2+) signaling. This Mus musculus (Mouse) protein is GTP-binding protein REM 1 (Rem1).